A 459-amino-acid chain; its full sequence is Proton-coupled folate transporter (459 aa).

Methionine 1 is modified (N-acetylmethionine). Topologically, residues 1–25 (MEGRVSPVGSSHRLLTAAVLFRGPV) are cytoplasmic. Serine 6 carries the phosphoserine modification. A helical transmembrane segment spans residues 26–44 (EPLVFLANFALVLQGPLTT). The Extracellular portion of the chain corresponds to 45–82 (QYIWHRISTELGYNGTRHRENCGNQSADPVLKEVETLT). N-linked (GlcNAc...) asparagine glycans are attached at residues asparagine 58 and asparagine 68. Cysteines 66 and 298 form a disulfide. The chain crosses the membrane as a helical span at residues 83-108 (SHWTLYMNVGGFLVGLFWSTLLGAWS). Residues 109-112 (DRVG) lie on the Cytoplasmic side of the membrane. A helical transmembrane segment spans residues 113–135 (RRPLLVLASLGLLLQAVVSIFVV). Residues 136–140 (QLQLH) are Extracellular-facing. Residues 141–154 (IGFFVLGRALCALL) traverse the membrane as a helical segment. Residues 155-177 (GDFNGLLAASFASVADVSSNHSR) are Cytoplasmic-facing. H(+) is bound by residues aspartate 156 and glutamate 185. A helical transmembrane segment spans residues 178-203 (TFRMALLEACIGVAGTLASLLGGHWL). At 204 to 208 (RAQGY) the chain is on the extracellular side. A helical transmembrane segment spans residues 209–227 (ANPFWLALAVLIVMTLYAA). The Cytoplasmic segment spans residues 228 to 266 (FCFGETVKEPKSTRLFTLRHHRSIVQLYVVPAPEKSRMH). Residues 267-289 (LALYSLAIFVVVTVHFGAQDILT) form a helical membrane-spanning segment. Histidine 281 is a H(+) binding site. The Extracellular portion of the chain corresponds to 290–302 (LYELSTPLCWDSK). A helical transmembrane segment spans residues 303–325 (LIGYGSAAQHLPYLTSLLGLRLL). Over 326 to 331 (QFCLAD) the chain is Cytoplasmic. The helical transmembrane segment at 332–351 (TWVAEIGLAFNILGMVVFAF) threads the bilayer. At 352-355 (ATIT) the chain is on the extracellular side. The chain crosses the membrane as a helical span at residues 356–376 (PLMFTGYGLLFLSLVTTPVIR). Residues 377-388 (AKLSKLVSESEQ) are Cytoplasmic-facing. The chain crosses the membrane as a helical span at residues 389-414 (GALFSAVACVNSLAMLMASGIFNSLY). Residues 415 to 422 (PATLNFMK) are Extracellular-facing. Residues 423 to 441 (GFPFLLGAGLLFIPAILIG) form a helical membrane-spanning segment. The Cytoplasmic segment spans residues 442–459 (VLEKVNPHPEFQQFPQNS).

It belongs to the major facilitator superfamily. SLC46A family. In terms of assembly, monomer. Expressed almost exclusively in the small intestine: expressed at high level in the upper half of the small intestine (duodenum and jejunum), expression decreases downwardly in the subsequent quarter and is undetectable in the last quarter (the lowest ileum). Expressed at low level in other tissues, including liver.

It localises to the cell membrane. The protein resides in the apical cell membrane. The protein localises to the basolateral cell membrane. Its subcellular location is the endosome membrane. It is found in the cytoplasm. The catalysed reaction is folate(in) + H(+)(in) = folate(out) + H(+)(out). It carries out the reaction (6S)-5-methyl-5,6,7,8-tetrahydrofolate(in) + H(+)(in) = (6S)-5-methyl-5,6,7,8-tetrahydrofolate(out) + H(+)(out). The enzyme catalyses methotrexate(in) + H(+)(in) = methotrexate(out) + H(+)(out). It catalyses the reaction pemetrexed(in) + H(+)(in) = pemetrexed(out) + H(+)(out). In contrast to human ortholog, not inhibited by myricetin. Its function is as follows. Proton-coupled folate symporter that mediates folate absorption using an H(+) gradient as a driving force. Involved in the intestinal absorption of folates at the brush-border membrane of the proximal jejunum, and the transport from blood to cerebrospinal fluid across the choroid plexus. Functions at acidic pH via alternate outward- and inward-open conformation states. Protonation of residues in the outward open state primes the protein for transport. Binding of folate promotes breaking of salt bridge network and subsequent closure of the extracellular gate, leading to the inward-open state and release of protons and folate. Also able to transport antifolate drugs, such as methotrexate and pemetrexed. Involved in FOLR1-mediated endocytosis by serving as a route of export of folates from acidified endosomes. Also acts as a lower-affinity, pH-independent heme carrier protein and constitutes the main importer of heme in the intestine. Imports heme in the retina and retinal pigment epithelium, in neurons of the hippocampus, in hepatocytes and in the renal epithelial cells. Hence, participates in the trafficking of heme and increases intracellular iron content. This is Proton-coupled folate transporter from Rattus norvegicus (Rat).